The following is a 260-amino-acid chain: Thiazole synthase (260 aa).

Residue Lys-96 is the Schiff-base intermediate with DXP of the active site. 1-deoxy-D-xylulose 5-phosphate-binding positions include Gly-157, 184-185 (AG), and 206-207 (NT).

It belongs to the ThiG family. Homotetramer. Forms heterodimers with either ThiH or ThiS.

The protein localises to the cytoplasm. The catalysed reaction is [ThiS sulfur-carrier protein]-C-terminal-Gly-aminoethanethioate + 2-iminoacetate + 1-deoxy-D-xylulose 5-phosphate = [ThiS sulfur-carrier protein]-C-terminal Gly-Gly + 2-[(2R,5Z)-2-carboxy-4-methylthiazol-5(2H)-ylidene]ethyl phosphate + 2 H2O + H(+). It functions in the pathway cofactor biosynthesis; thiamine diphosphate biosynthesis. Functionally, catalyzes the rearrangement of 1-deoxy-D-xylulose 5-phosphate (DXP) to produce the thiazole phosphate moiety of thiamine. Sulfur is provided by the thiocarboxylate moiety of the carrier protein ThiS. In vitro, sulfur can be provided by H(2)S. The protein is Thiazole synthase of Rhodopseudomonas palustris (strain BisB18).